The chain runs to 144 residues: UPF0102 protein BTH_I3148 (144 aa).

The interval 1–20 (MCHARAARQATGEAEAAPRD) is disordered.

The protein belongs to the UPF0102 family.

The sequence is that of UPF0102 protein BTH_I3148 from Burkholderia thailandensis (strain ATCC 700388 / DSM 13276 / CCUG 48851 / CIP 106301 / E264).